A 385-amino-acid polypeptide reads, in one-letter code: Glucans biosynthesis protein C (385 aa).

A run of 10 helical transmembrane segments spans residues Ala17–Trp37, Met60–Leu80, Val91–Gln111, Ile137–Phe157, Lys173–Ile193, Phe212–Ile232, Leu239–Leu259, Thr274–Gly294, Ala311–Thr331, and Trp338–Ile358.

The protein belongs to the acyltransferase 3 family. OpgC subfamily.

It localises to the cell membrane. It functions in the pathway glycan metabolism; osmoregulated periplasmic glucan (OPG) biosynthesis. Necessary for the succinyl substitution of periplasmic glucans. Could catalyze the transfer of succinyl residues from the cytoplasmic side of the membrane to the nascent glucan backbones on the periplasmic side of the membrane. This chain is Glucans biosynthesis protein C, found in Shigella sonnei (strain Ss046).